Here is a 228-residue protein sequence, read N- to C-terminus: UPF0173 metal-dependent hydrolase RBAM_026340 (228 aa).

This sequence belongs to the UPF0173 family.

This chain is UPF0173 metal-dependent hydrolase RBAM_026340, found in Bacillus velezensis (strain DSM 23117 / BGSC 10A6 / LMG 26770 / FZB42) (Bacillus amyloliquefaciens subsp. plantarum).